A 399-amino-acid chain; its full sequence is Serine palmitoyltransferase (399 aa).

Pyridoxal 5'-phosphate is bound by residues 113-114, His-213, Thr-241, and Ser-243; that span reads GF. Lys-244 is subject to N6-(pyridoxal phosphate)lysine.

This sequence belongs to the class-II pyridoxal-phosphate-dependent aminotransferase family. Homodimer. Pyridoxal 5'-phosphate serves as cofactor.

The protein localises to the cytoplasm. It carries out the reaction L-serine + hexadecanoyl-CoA + H(+) = 3-oxosphinganine + CO2 + CoA. The protein operates within lipid metabolism; sphingolipid metabolism. In terms of biological role, catalyzes the condensation of L-serine with palmitoyl-CoA (hexadecanoyl-CoA) to produce 3-oxosphinganine. This chain is Serine palmitoyltransferase, found in Sphingobacterium spiritivorum (Flavobacterium spiritivorum).